A 155-amino-acid polypeptide reads, in one-letter code: Transcriptional repressor NrdR (155 aa).

Polar residues predominate over residues 1 to 11 (MECPNCHQNAS). Positions 1-22 (MECPNCHQNASRVIDSRPSDEN) are disordered. A zinc finger lies at 3 to 34 (CPNCHQNASRVIDSRPSDENRAIRRRRECENC). One can recognise an ATP-cone domain in the interval 49–139 (LLVVKNDGTR…IYREFKDMSS (91 aa)).

Belongs to the NrdR family. It depends on Zn(2+) as a cofactor.

Its function is as follows. Negatively regulates transcription of bacterial ribonucleotide reductase nrd genes and operons by binding to NrdR-boxes. In Lactobacillus acidophilus (strain ATCC 700396 / NCK56 / N2 / NCFM), this protein is Transcriptional repressor NrdR.